Reading from the N-terminus, the 342-residue chain is MADPKSSFLNVYSILKSELLQDPAFEFSTDSRQWVERMLDYNVPGGKLNRGLSVIDSYKLLKDGQELNDEEIFLASALGWCIEWLQAYFLVLDDIMDNSHTRRGHPCWFRVPKVGMIAPNDGVVLRNHIPRILKKHFRGKPYYVDLLDLFNEVEFQTASGQMIDLITTLEGEKDLSKYTLSLHRRIVQYKTAYYSFYLPVACALLMVGENLDNHTDVKNILVEMGTYFQVQDDYLDCFGAPETIGKIGTDIEDFKCSWLVVKALELSNEEQKKVLYENYGKPDPANVAKVKTLYNELNLEGAYADYESKSYEKLVTCIEGHPSKAVQGVLKSFWAKIYKRQK.

Residues lysine 47, arginine 50, and glutamine 86 each contribute to the isopentenyl diphosphate site. Mg(2+) is bound by residues aspartate 93 and aspartate 97. Arginine 102 is a binding site for dimethylallyl diphosphate. An isopentenyl diphosphate-binding site is contributed by arginine 103. Dimethylallyl diphosphate-binding residues include lysine 190, threonine 191, glutamine 229, lysine 246, and lysine 255.

It belongs to the FPP/GGPP synthase family. It depends on Mg(2+) as a cofactor.

Its subcellular location is the cytoplasm. The catalysed reaction is isopentenyl diphosphate + dimethylallyl diphosphate = (2E)-geranyl diphosphate + diphosphate. It carries out the reaction isopentenyl diphosphate + (2E)-geranyl diphosphate = (2E,6E)-farnesyl diphosphate + diphosphate. The protein operates within isoprenoid biosynthesis; farnesyl diphosphate biosynthesis; farnesyl diphosphate from geranyl diphosphate and isopentenyl diphosphate: step 1/1. It functions in the pathway isoprenoid biosynthesis; geranyl diphosphate biosynthesis; geranyl diphosphate from dimethylallyl diphosphate and isopentenyl diphosphate: step 1/1. In terms of biological role, catalyzes the sequential condensation of isopentenyl pyrophosphate with the allylic pyrophosphates, dimethylallyl pyrophosphate, and then with the resultant geranylpyrophosphate to the ultimate product farnesyl pyrophosphate. This Lupinus albus (White lupine) protein is Farnesyl pyrophosphate synthase 2 (FPS2).